The following is a 1129-amino-acid chain: CRISPR-associated endonuclease Cas12b (1129 aa).

The interval 1–14 (MAVKSIKVKLRLDD) is WED-I (OBD-I) domain. Residues 4-9 (KSIKVK) are binds sgRNA. The interval 15–386 (MPEIRAGLWK…FATFTLPDAT (372 aa)) is REC1 (Helical-1)domain. 2 binds DNA protospacer adjacent motif (PAM) on target DNA regions span residues 118-122 (QQIAR) and 143-144 (GN). The interval 387-518 (AHPIWTRFDK…QSQSEARGER (132 aa)) is WED-II (OBD-II) domain. The binds sgRNA stretch occupies residues 442 to 446 (SMSEQ). The segment at 519 to 628 (RPPYAAVFRL…LLKLPGETES (110 aa)) is ruvC-I domain. Asp-570 acts as the For DNase activity of RuvC domain in catalysis. Positions 573 to 574 (LR) are binds non-target ssDNA. The interval 629-658 (KDLRAIREERQRTLRQLRTQLAYLRLLVRC) is bridge helix domain. Residues 659 to 784 (GSEDVGRRER…SFFGKVSGQV (126 aa)) form an REC2 (Helical-II) domain region. Binds sgRNA stretches follow at residues 742 to 746 (RPKIR), 753 to 754 (VG), 792 to 796 (RFAIT), 800 to 819 (HIDH…IIME), and 835 to 839 (WVAKY). A ruvC-II domain region spans residues 785-900 (IRAEKGSRFA…GTMYAAFSSR (116 aa)). Glu-848 (for DNase activity of RuvC domain) is an active-site residue. Residues 897–900 (FSSR) form a binds non-target ssDNA region. Residues Ser-899 and Arg-911 each contribute to the phosphate site. The nuc-I domain stretch occupies residues 901–974 (FDARTGAPGI…SAEEGDFHQI (74 aa)). Residues 973–978 (QIHADL) are binds sgRNA. Residues 975–993 (HADLNAAQNLQQRLWSDFD) are ruvC-III domain. Catalysis depends on Asp-977, which acts as the For DNase activity of RuvC domain. The segment at 994-1129 (ISQIRLRCDW…DSACENTGDI (136 aa)) is nuc-II domain.

It belongs to the CRISPR-associated endonuclease Cas12b family. Monomer. A divalent metal cation serves as cofactor.

Functionally, CRISPR (clustered regularly interspaced short palindromic repeat), is an adaptive immune system that provides protection against mobile genetic elements (viruses, transposable elements and conjugative plasmids). CRISPR clusters contain sequences complementary to antecedent mobile elements and target invading nucleic acids. CRISPR clusters are transcribed and processed into CRISPR RNA (crRNA). In type II CRISPR systems correct processing of pre-crRNA requires a trans-encoded small RNA (tracrRNA), endogenous ribonuclease 3 (rnc) and this protein. The tracrRNA serves as a guide for ribonuclease 3-aided processing of pre-crRNA. Protein-crRNA-tracrRNA endonucleolytically cleave dsDNA target complementary to the spacer; protein is inactive in the absence of crRNA homologous to the target and tracrRNA. Recognizes a short motif in the CRISPR repeat sequences (the 5' PAM or protospacer adjacent motif, TTN in this organism) to help distinguish self versus nonself, as targets within the bacterial CRISPR locus do not have PAMs. PAM recognition is also required for catalytic activity. Cleavage results in staggered 6-8 base 5'-overhangs 14-17 and 23-24 bases downstream of the PAM (protospacer adjacent motif) on the non-target and target strands respectively. Both target and non-target strand DNA are probably independently cleaved in the same active site. The chain is CRISPR-associated endonuclease Cas12b from Alicyclobacillus acidoterrestris (strain ATCC 49025 / DSM 3922 / CIP 106132 / NCIMB 13137 / GD3B).